Reading from the N-terminus, the 274-residue chain is Beta-lactamase OXA-9 (274 aa).

The signal sequence occupies residues 1-24; it reads MKKILLLHMLVFVSATLPISSVAS. Catalysis depends on S58, which acts as the Acyl-ester intermediate. Residue K61 is modified to N6-carboxylysine. Residue 206-208 coordinates substrate; it reads KSG.

This sequence belongs to the class-D beta-lactamase family.

It carries out the reaction a beta-lactam + H2O = a substituted beta-amino acid. Its function is as follows. Oxacillin-hydrolyzing beta-lactamase. Confers resistance to beta-lactam antibiotics but at a significantly lower level than the TEM bla gene product. The sequence is that of Beta-lactamase OXA-9 (bla) from Klebsiella aerogenes (Enterobacter aerogenes).